Reading from the N-terminus, the 214-residue chain is Uridine kinase (214 aa).

ATP is bound at residue 15–22 (GASASGKS).

This sequence belongs to the uridine kinase family.

The protein resides in the cytoplasm. It carries out the reaction uridine + ATP = UMP + ADP + H(+). The catalysed reaction is cytidine + ATP = CMP + ADP + H(+). It functions in the pathway pyrimidine metabolism; CTP biosynthesis via salvage pathway; CTP from cytidine: step 1/3. The protein operates within pyrimidine metabolism; UMP biosynthesis via salvage pathway; UMP from uridine: step 1/1. The polypeptide is Uridine kinase (Tolumonas auensis (strain DSM 9187 / NBRC 110442 / TA 4)).